Reading from the N-terminus, the 223-residue chain is Adenylate kinase (223 aa).

Gly-17–Thr-22 is a binding site for ATP. Residues Ser-37–Val-66 form an NMP region. Residues Thr-38, Arg-43, Gly-64–Val-66, Gly-93–Arg-96, and Gln-100 contribute to the AMP site. Residues Gly-134 to Asp-171 form an LID region. Residues Arg-135 and Ser-144 to Tyr-145 each bind ATP. Residues Arg-168 and Arg-179 each contribute to the AMP site. Gln-207 provides a ligand contact to ATP.

This sequence belongs to the adenylate kinase family. AK2 subfamily. As to quaternary structure, monomer.

It localises to the cytoplasm. Its subcellular location is the cytosol. The protein localises to the mitochondrion intermembrane space. The catalysed reaction is AMP + ATP = 2 ADP. In terms of biological role, catalyzes the reversible transfer of the terminal phosphate group between ATP and AMP. Plays an important role in cellular energy homeostasis and in adenine nucleotide metabolism. Adenylate kinase activity is critical for regulation of the phosphate utilization and the AMP de novo biosynthesis pathways. This is Adenylate kinase from Vanderwaltozyma polyspora (strain ATCC 22028 / DSM 70294 / BCRC 21397 / CBS 2163 / NBRC 10782 / NRRL Y-8283 / UCD 57-17) (Kluyveromyces polysporus).